We begin with the raw amino-acid sequence, 316 residues long: 33 kDa chaperonin (316 aa).

2 disulfides stabilise this stretch: Cys-239–Cys-241 and Cys-272–Cys-275.

The protein belongs to the HSP33 family. Post-translationally, under oxidizing conditions two disulfide bonds are formed involving the reactive cysteines. Under reducing conditions zinc is bound to the reactive cysteines and the protein is inactive.

Its subcellular location is the cytoplasm. In terms of biological role, redox regulated molecular chaperone. Protects both thermally unfolding and oxidatively damaged proteins from irreversible aggregation. Plays an important role in the bacterial defense system toward oxidative stress. The polypeptide is 33 kDa chaperonin (Clostridium perfringens (strain SM101 / Type A)).